Here is a 313-residue protein sequence, read N- to C-terminus: METANYTKVTEFVLTGLSQTPEVQLVLFVIFLSFYLFILPGNILIICTISLDPHLTSPMYFLLANLAFLDIWYSSITAPEMLIDFFVERKIISFDECIAQLFFLHFAGASEMFLLTVMAFDLYTAICRPLHYATIMNQRLCCILVALSWRGGFIHSIIQVALIVRLPFCGPNELDSYFCDITQVVRIACANTFPEELVMICSSGLISVVCLIALLMSYAFLLALLKKLSGSGENTNRAVSTCYSHITIVVLMFGPSIYIYARPFDSFSLDKVVSVFNTLIFPLHNPIIYTLRNKEVKAAMRKLVTKYILCKEK.

At 1 to 25 (METANYTKVTEFVLTGLSQTPEVQL) the chain is on the cytoplasmic side. The chain crosses the membrane as a helical span at residues 26-46 (VLFVIFLSFYLFILPGNILII). The Extracellular segment spans residues 47–57 (CTISLDPHLTS). Residues 58–78 (PMYFLLANLAFLDIWYSSITA) traverse the membrane as a helical segment. The Cytoplasmic segment spans residues 79–97 (PEMLIDFFVERKIISFDEC). A disulfide bridge connects residues cysteine 97 and cysteine 179. A helical membrane pass occupies residues 98–118 (IAQLFFLHFAGASEMFLLTVM). The Extracellular portion of the chain corresponds to 119–142 (AFDLYTAICRPLHYATIMNQRLCC). The chain crosses the membrane as a helical span at residues 143-163 (ILVALSWRGGFIHSIIQVALI). Topologically, residues 164–204 (VRLPFCGPNELDSYFCDITQVVRIACANTFPEELVMICSSG) are cytoplasmic. Residues 205 to 225 (LISVVCLIALLMSYAFLLALL) form a helical membrane-spanning segment. At 226-238 (KKLSGSGENTNRA) the chain is on the extracellular side. The chain crosses the membrane as a helical span at residues 239-259 (VSTCYSHITIVVLMFGPSIYI). The Cytoplasmic portion of the chain corresponds to 260-270 (YARPFDSFSLD). A helical transmembrane segment spans residues 271–291 (KVVSVFNTLIFPLHNPIIYTL). The Extracellular portion of the chain corresponds to 292–313 (RNKEVKAAMRKLVTKYILCKEK).

Belongs to the G-protein coupled receptor 1 family.

It is found in the membrane. Functionally, odorant receptor. In Homo sapiens (Human), this protein is Olfactory receptor 4M2.